The chain runs to 1171 residues: APC-related protein 1 (1171 aa).

Residues 1 to 54 (MSSSSSDENETTIHSSSNPGSSGIYSQLKAGSSKRPSVRHDVSDAEDDEEPYEG) are disordered. The interval 1–481 (MSSSSSDENE…LSLRATRASP (481 aa)) is required for interaction with bar-1 and hmp-2. Positions 15 to 26 (SSSNPGSSGIYS) are enriched in low complexity. The ARM repeat unit spans residues 312 to 356 (NCLKVLANILSPDARFTTLVDSASGILKYVSQYLATNSSHLELRS). Disordered stretches follow at residues 587-617 (PVDD…NPGS), 662-699 (HPED…GTTV), 720-741 (RKTS…LEVE), 767-822 (EEMP…EMTT), 837-936 (PRSR…TMRI), and 995-1030 (SSGS…SSLP). Positions 591–1171 (DLDIPTSTVM…NPKQMLVTIV (581 aa)) are required for interaction with pry-1. 2 stretches are compositionally biased toward polar residues: residues 595 to 617 (PTST…NPGS) and 666 to 697 (NQMT…SDGT). Residues 788–799 (FSPSQKTTSSPA) are compositionally biased toward polar residues. A compositionally biased stretch (basic and acidic residues) spans 857–874 (EPDRSSHSKNEEADRRDA). Polar residues-rich tracts occupy residues 890–913 (RGSS…SSED) and 1002–1028 (LQKA…SVSS).

This sequence belongs to the adenomatous polyposis coli (APC) family. Interacts (via N-terminus) with bar-1 and hmp-2; the interaction with hmp-2 is relatively weak. Interacts (via C-terminus) with pry-1 (via N-terminus). Probably associates with bar-1, gsk-3, pry-1 in a complex.

The protein localises to the cell junction. It is found in the adherens junction. It localises to the cytoplasm. Its subcellular location is the nucleus. In terms of biological role, has a role in endoderm cell specification and pharyngeal development. Required for the migration of epithelial cells, organization of the anterior seam cells and ceh-13 expression during embryo morphogenesis. Prevents hyperactivation of the Wnt signaling pathway during endoderm development, probably by preventing hmp-2 nuclear translocation. During larval development, apr-1 is required for expression of lin-39 in P3-8.p. Shown to negatively regulate Wnt signaling in vulval precursor cells. Has a role in cell division by establishing the polarity of the mother cell which forms the asymmetries of the daughter nuclei. Thought to regulate export of wrm-1 from the nucleus possibly as part of a complex involving pry-1. The polypeptide is APC-related protein 1 (Caenorhabditis briggsae).